We begin with the raw amino-acid sequence, 344 residues long: Heat-inducible transcription repressor HrcA (344 aa).

This sequence belongs to the HrcA family.

Functionally, negative regulator of class I heat shock genes (grpE-dnaK-dnaJ and groELS operons). Prevents heat-shock induction of these operons. The polypeptide is Heat-inducible transcription repressor HrcA (Streptococcus pyogenes serotype M6 (strain ATCC BAA-946 / MGAS10394)).